Reading from the N-terminus, the 117-residue chain is Large ribosomal subunit protein bL19 (117 aa).

The protein belongs to the bacterial ribosomal protein bL19 family.

Its function is as follows. This protein is located at the 30S-50S ribosomal subunit interface and may play a role in the structure and function of the aminoacyl-tRNA binding site. This chain is Large ribosomal subunit protein bL19, found in Micrococcus luteus (strain ATCC 4698 / DSM 20030 / JCM 1464 / CCM 169 / CCUG 5858 / IAM 1056 / NBRC 3333 / NCIMB 9278 / NCTC 2665 / VKM Ac-2230) (Micrococcus lysodeikticus).